Here is a 273-residue protein sequence, read N- to C-terminus: MTGTTENDNTGEDEKPKDEECAAIEHKDKFNPTAYLNSFYKTASEDTAMQIVLFFLPGILYRLPQKVRSVLDLGAGPTVYLPISLRDRAENIYTSDYAPANRDTLINWIEDKSDFDWDNVCSWIANIEASMETGKQMQNKTRKLMRAVLDVNVHESPVVQSIVWKENEQVQVPDKFQVVSTVFCLEYSCETLEAYFRAVRSACSLIDEGGILIQGGVLDATTYNFGGKTFRCHRLKQAHIIESLKANGMATTAEQGYKFITHDDIFLLVSKKL.

S-adenosyl-L-methionine-binding positions include tyrosine 35, tyrosine 40, glycine 74–alanine 75, tyrosine 80, aspartate 96, asparagine 101, and asparagine 152–valine 153.

It belongs to the class I-like SAM-binding methyltransferase superfamily. NNMT/PNMT/TEMT family.

The catalysed reaction is nicotinamide + S-adenosyl-L-methionine = 1-methylnicotinamide + S-adenosyl-L-homocysteine. Catalyzes the N-methylation of nicotinamide and other pyridines to form pyridinium ions. Involved in regulation of lifespan extension downstream of the sirtuin sir-2.1, probably through its role in nicotinic acid metabolism. The sequence is that of Nicotinamide N-methyltransferase from Caenorhabditis elegans.